We begin with the raw amino-acid sequence, 248 residues long: NADP-dependent 3-hydroxy acid dehydrogenase YdfG (248 aa).

Residues 7 to 12 (GATAGF), 32 to 33 (RR), 54 to 55 (DV), and Asn-81 each bind NADP(+). Ser-134 lines the substrate pocket. Residues Tyr-147, Lys-151, and 177–185 (PGLVGGTEF) contribute to the NADP(+) site. The Proton acceptor role is filled by Tyr-147.

The protein belongs to the short-chain dehydrogenases/reductases (SDR) family. Homotetramer.

It catalyses the reaction 3-hydroxypropanoate + NADP(+) = 3-oxopropanoate + NADPH + H(+). The enzyme catalyses L-allo-threonine + NADP(+) = aminoacetone + CO2 + NADPH. Functionally, NADP-dependent dehydrogenase with broad substrate specificity acting on 3-hydroxy acids. Catalyzes the NADP-dependent oxidation of L-allo-threonine to L-2-amino-3-keto-butyrate, which is spontaneously decarboxylated into aminoacetone. Also acts on D-threonine, L-serine, D-serine, D-3-hydroxyisobutyrate, L-3-hydroxyisobutyrate, D-glycerate and L-glycerate. Able to catalyze the reduction of the malonic semialdehyde to 3-hydroxypropionic acid. YdfG is apparently supplementing RutE, the presumed malonic semialdehyde reductase involved in pyrimidine degradation since both are able to detoxify malonic semialdehyde. The protein is NADP-dependent 3-hydroxy acid dehydrogenase YdfG of Escherichia coli O157:H7.